The chain runs to 118 residues: Large ribosomal subunit protein bL20 (118 aa).

This sequence belongs to the bacterial ribosomal protein bL20 family.

In terms of biological role, binds directly to 23S ribosomal RNA and is necessary for the in vitro assembly process of the 50S ribosomal subunit. It is not involved in the protein synthesizing functions of that subunit. This Staphylococcus haemolyticus (strain JCSC1435) protein is Large ribosomal subunit protein bL20.